The sequence spans 87 residues: Large ribosomal subunit protein eL33 (87 aa).

This sequence belongs to the eukaryotic ribosomal protein eL33 family.

The chain is Large ribosomal subunit protein eL33 from Pyrococcus abyssi (strain GE5 / Orsay).